A 471-amino-acid chain; its full sequence is Heat shock 70 kDa protein 13 (471 aa).

The signal sequence occupies residues 1-22; that stretch reads MAGEMTILGSAVLTLLLAGYLA. A glycan (N-linked (GlcNAc...) asparagine) is linked at Asn184. The tract at residues 316-339 is disordered; that stretch reads NDSQKPQNADSKLPEDQLTPGDGH.

This sequence belongs to the heat shock protein 70 family. As to quaternary structure, binds UBQLN2.

The protein resides in the microsome. It is found in the endoplasmic reticulum. Has peptide-independent ATPase activity. The chain is Heat shock 70 kDa protein 13 (Hspa13) from Rattus norvegicus (Rat).